The following is a 375-amino-acid chain: Protein HrmA (375 aa).

Unknown. May serve a regulatory function. The chain is Protein HrmA (hrmA) from Pseudomonas syringae pv. syringae.